The sequence spans 334 residues: tRNA N6-adenosine threonylcarbamoyltransferase (334 aa).

His-107 and His-111 together coordinate Fe cation. Residues 129-133 (LVSGG), Asp-162, Gly-175, and Asn-269 contribute to the substrate site. Asp-297 serves as a coordination point for Fe cation.

The protein belongs to the KAE1 / TsaD family. Fe(2+) is required as a cofactor.

It is found in the cytoplasm. The enzyme catalyses L-threonylcarbamoyladenylate + adenosine(37) in tRNA = N(6)-L-threonylcarbamoyladenosine(37) in tRNA + AMP + H(+). Functionally, required for the formation of a threonylcarbamoyl group on adenosine at position 37 (t(6)A37) in tRNAs that read codons beginning with adenine. Is involved in the transfer of the threonylcarbamoyl moiety of threonylcarbamoyl-AMP (TC-AMP) to the N6 group of A37, together with TsaE and TsaB. TsaD likely plays a direct catalytic role in this reaction. This chain is tRNA N6-adenosine threonylcarbamoyltransferase, found in Campylobacter concisus (strain 13826).